A 365-amino-acid chain; its full sequence is MRRVILTTGGTGGHIFPALAVAEEIRARYPECSVLFMGGLYGPEADLAARAGLDFVGLPVRGVLGRGVRAIGAAFGMAAGIARAYAVMGRFDPDIVLGFGGYAAFAGVLAARLRGRPAAIHEQNSVPGLTNRVLSRVVPRVFLSLPDTLGAFPPQKTCLAGNPVRASIVACGAERSDPRPDHVRRLLVMGGSLGARAINDAVVSSLPALAEAGVEVWHQTGAADWERIRKAYAETGHGEGRVEAFIDDVASAYAWADLVLCRAGATSVAELAVAGKPAVLVPYPFATHDHQTHNARWLVSRGAAVLLEQKDISMTDVPALLVGLLSDRARLNRMAVSARAQGRPDAAAAVVDGLVELLKTTPRAR.

UDP-N-acetyl-alpha-D-glucosamine is bound by residues 11–13 (TGG), N124, R165, S192, I246, and Q291.

The protein belongs to the glycosyltransferase 28 family. MurG subfamily.

The protein resides in the cell inner membrane. It carries out the reaction di-trans,octa-cis-undecaprenyl diphospho-N-acetyl-alpha-D-muramoyl-L-alanyl-D-glutamyl-meso-2,6-diaminopimeloyl-D-alanyl-D-alanine + UDP-N-acetyl-alpha-D-glucosamine = di-trans,octa-cis-undecaprenyl diphospho-[N-acetyl-alpha-D-glucosaminyl-(1-&gt;4)]-N-acetyl-alpha-D-muramoyl-L-alanyl-D-glutamyl-meso-2,6-diaminopimeloyl-D-alanyl-D-alanine + UDP + H(+). Its pathway is cell wall biogenesis; peptidoglycan biosynthesis. Functionally, cell wall formation. Catalyzes the transfer of a GlcNAc subunit on undecaprenyl-pyrophosphoryl-MurNAc-pentapeptide (lipid intermediate I) to form undecaprenyl-pyrophosphoryl-MurNAc-(pentapeptide)GlcNAc (lipid intermediate II). This chain is UDP-N-acetylglucosamine--N-acetylmuramyl-(pentapeptide) pyrophosphoryl-undecaprenol N-acetylglucosamine transferase, found in Nitratidesulfovibrio vulgaris (strain ATCC 29579 / DSM 644 / CCUG 34227 / NCIMB 8303 / VKM B-1760 / Hildenborough) (Desulfovibrio vulgaris).